A 338-amino-acid polypeptide reads, in one-letter code: Phosphonates-binding periplasmic protein (338 aa).

The first 26 residues, 1–26 (MNAKIIASLAFTSMFSLSTLLSPAHA), serve as a signal peptide directing secretion.

Belongs to the phosphate/phosphite/phosphonate binding protein family. In terms of assembly, the complex is composed of two ATP-binding proteins (PhnC), two transmembrane proteins (PhnE) and a solute-binding protein (PhnD).

Its subcellular location is the periplasm. In terms of biological role, phosphonate binding protein that is part of the phosphonate uptake system. Exhibits high affinity for 2-aminoethylphosphonate, and somewhat less affinity to ethylphosphonate, methylphosphonate, phosphonoacetate and phenylphosphonate. The sequence is that of Phosphonates-binding periplasmic protein (phnD) from Escherichia coli (strain K12).